The sequence spans 434 residues: Trigger factor (434 aa).

In terms of domain architecture, PPIase FKBP-type spans 161–246; the sequence is EDRVTVDFNG…LKKVEERELP (86 aa).

Belongs to the FKBP-type PPIase family. Tig subfamily.

The protein localises to the cytoplasm. The catalysed reaction is [protein]-peptidylproline (omega=180) = [protein]-peptidylproline (omega=0). Involved in protein export. Acts as a chaperone by maintaining the newly synthesized protein in an open conformation. Functions as a peptidyl-prolyl cis-trans isomerase. The polypeptide is Trigger factor (Proteus mirabilis (strain HI4320)).